Here is a 172-residue protein sequence, read N- to C-terminus: NADH-quinone oxidoreductase subunit B 1 (172 aa).

Residues Cys42, Cys43, Cys107, and Cys137 each coordinate [4Fe-4S] cluster.

This sequence belongs to the complex I 20 kDa subunit family. As to quaternary structure, NDH-1 is composed of 14 different subunits. Subunits NuoB, C, D, E, F, and G constitute the peripheral sector of the complex. [4Fe-4S] cluster serves as cofactor.

It is found in the cell inner membrane. It catalyses the reaction a quinone + NADH + 5 H(+)(in) = a quinol + NAD(+) + 4 H(+)(out). Its function is as follows. NDH-1 shuttles electrons from NADH, via FMN and iron-sulfur (Fe-S) centers, to quinones in the respiratory chain. Couples the redox reaction to proton translocation (for every two electrons transferred, four hydrogen ions are translocated across the cytoplasmic membrane), and thus conserves the redox energy in a proton gradient. In Anaeromyxobacter sp. (strain Fw109-5), this protein is NADH-quinone oxidoreductase subunit B 1.